Consider the following 186-residue polypeptide: Adenylate kinase (186 aa).

10-15 is a binding site for ATP; that stretch reads GVGKGT. Positions 30-59 are NMP; the sequence is STGDIFRYNIKNKTELGLEAMSYTDKGELV. Residues threonine 31, arginine 36, 57 to 59, 85 to 88, and glutamine 92 each bind AMP; these read ELV and GYPR. The tract at residues 126–136 is LID; that stretch reads KRAAEQGRADD. Arginine 127 provides a ligand contact to ATP. Positions 133 and 144 each coordinate AMP. ATP is bound at residue glycine 172.

This sequence belongs to the adenylate kinase family. Monomer.

The protein localises to the cytoplasm. The catalysed reaction is AMP + ATP = 2 ADP. The protein operates within purine metabolism; AMP biosynthesis via salvage pathway; AMP from ADP: step 1/1. Its function is as follows. Catalyzes the reversible transfer of the terminal phosphate group between ATP and AMP. Plays an important role in cellular energy homeostasis and in adenine nucleotide metabolism. The protein is Adenylate kinase of Bifidobacterium longum (strain NCC 2705).